A 152-amino-acid chain; its full sequence is Flagellar basal-body rod protein FlgC (152 aa).

This sequence belongs to the flagella basal body rod proteins family. The basal body constitutes a major portion of the flagellar organelle and consists of four rings (L,P,S, and M) mounted on a central rod. The rod consists of about 26 subunits of FlgG in the distal portion, and FlgB, FlgC and FlgF are thought to build up the proximal portion of the rod with about 6 subunits each.

The protein resides in the bacterial flagellum basal body. This Borreliella burgdorferi (strain ATCC 35210 / DSM 4680 / CIP 102532 / B31) (Borrelia burgdorferi) protein is Flagellar basal-body rod protein FlgC (flgC).